Reading from the N-terminus, the 451-residue chain is DNA double-strand break repair nuclease NurA (451 aa).

D51 and D126 together coordinate Mn(2+).

This sequence belongs to the NurA family. In terms of assembly, homodimer. Interacts with HerA. Mn(2+) serves as cofactor.

Its activity is regulated as follows. Exonuclease activity is stimulated in the presence of HerA. Involved in DNA double-strand break (DSB) repair. Probably acts with HerA to stimulate resection of the 5' strand and produce the long 3' single-strand that is required for RadA loading. Exhibits 5' endonuclease activity and both 5' and 3' exonuclease activities. This is DNA double-strand break repair nuclease NurA from Pyrococcus furiosus (strain ATCC 43587 / DSM 3638 / JCM 8422 / Vc1).